The primary structure comprises 253 residues: Ubiquinone biosynthesis O-methyltransferase (253 aa).

The S-adenosyl-L-methionine site is built by R41, G72, D93, and L136.

Belongs to the methyltransferase superfamily. UbiG/COQ3 family.

It carries out the reaction a 3-demethylubiquinol + S-adenosyl-L-methionine = a ubiquinol + S-adenosyl-L-homocysteine + H(+). The enzyme catalyses a 3-(all-trans-polyprenyl)benzene-1,2-diol + S-adenosyl-L-methionine = a 2-methoxy-6-(all-trans-polyprenyl)phenol + S-adenosyl-L-homocysteine + H(+). The protein operates within cofactor biosynthesis; ubiquinone biosynthesis. Functionally, O-methyltransferase that catalyzes the 2 O-methylation steps in the ubiquinone biosynthetic pathway. The protein is Ubiquinone biosynthesis O-methyltransferase of Azorhizobium caulinodans (strain ATCC 43989 / DSM 5975 / JCM 20966 / LMG 6465 / NBRC 14845 / NCIMB 13405 / ORS 571).